Reading from the N-terminus, the 486-residue chain is Membrane-bound lytic murein transglycosylase F (486 aa).

Residues 1–21 (MTRIKLSYFTIGLVALLLALA) form the signal peptide. Positions 22 to 268 (LWPNIPWRNG…RLEEKYLGHV (247 aa)) are non-LT domain. The interval 269–486 (GSFDYVDTKT…VVGPGWSIGD (218 aa)) is LT domain. Residue glutamate 313 is part of the active site.

It in the N-terminal section; belongs to the bacterial solute-binding protein 3 family. This sequence in the C-terminal section; belongs to the transglycosylase Slt family.

The protein localises to the cell outer membrane. The enzyme catalyses Exolytic cleavage of the (1-&gt;4)-beta-glycosidic linkage between N-acetylmuramic acid (MurNAc) and N-acetylglucosamine (GlcNAc) residues in peptidoglycan, from either the reducing or the non-reducing ends of the peptidoglycan chains, with concomitant formation of a 1,6-anhydrobond in the MurNAc residue.. In terms of biological role, murein-degrading enzyme that degrades murein glycan strands and insoluble, high-molecular weight murein sacculi, with the concomitant formation of a 1,6-anhydromuramoyl product. Lytic transglycosylases (LTs) play an integral role in the metabolism of the peptidoglycan (PG) sacculus. Their lytic action creates space within the PG sacculus to allow for its expansion as well as for the insertion of various structures such as secretion systems and flagella. The protein is Membrane-bound lytic murein transglycosylase F of Yersinia pseudotuberculosis serotype I (strain IP32953).